A 704-amino-acid polypeptide reads, in one-letter code: Tetratricopeptide repeat protein 12 (704 aa).

Thr-71 bears the Phosphothreonine mark. TPR repeat units lie at residues 105 to 138 (ADALKEKGNEAFVRGDYETAIFFYSEGLGKLKDM), 139 to 172 (KVLYTNRAQAFIKLGDYQKALVDCDWALKCDENC), and 173 to 206 (TKAYFHMGKAHVALKNYSKAKECYQKIEEINPKL).

It localises to the cytoplasm. Its function is as follows. Cytoplasmic protein that plays a role in the proper assembly of dynein arm complexes in motile cilia in both respiratory cells and sperm flagella. In Mus musculus (Mouse), this protein is Tetratricopeptide repeat protein 12 (Ttc12).